The chain runs to 407 residues: Methylthioribose kinase (407 aa).

ATP is bound by residues Asn40, Lys57, and 111–113 (EDL). Asp229 contributes to the substrate binding site. 246-248 (DAE) serves as a coordination point for ATP. Residue Arg344 coordinates substrate.

The protein belongs to the methylthioribose kinase family. As to quaternary structure, homodimer.

The enzyme catalyses 5-(methylsulfanyl)-D-ribose + ATP = 5-(methylsulfanyl)-alpha-D-ribose 1-phosphate + ADP + H(+). It functions in the pathway amino-acid biosynthesis; L-methionine biosynthesis via salvage pathway; S-methyl-5-thio-alpha-D-ribose 1-phosphate from S-methyl-5'-thioadenosine (hydrolase route): step 2/2. Catalyzes the phosphorylation of methylthioribose into methylthioribose-1-phosphate. The protein is Methylthioribose kinase of Yersinia pseudotuberculosis serotype O:1b (strain IP 31758).